An 842-amino-acid chain; its full sequence is DNA topoisomerase-like protein cin-4 (842 aa).

The span at 1–26 (MSEEDRNVFTSIDKKGGGSKQMDDLN) shows a compositional bias: basic and acidic residues. Residues 1 to 50 (MSEEDRNVFTSIDKKGGGSKQMDDLNQKCPKRKTSKLKGIPKLEDANDAG) form a disordered region. The region spanning 314-783 (IPCLVDGLKP…TWQDLWITDL (470 aa)) is the Topo IIA-type catalytic domain.

This sequence belongs to the type II topoisomerase family.

Plays a role in the removal of cohesin from kinetochores on mitotic chromosomes and is required for centromere resolution. The chain is DNA topoisomerase-like protein cin-4 from Caenorhabditis elegans.